The following is a 546-amino-acid chain: Probable protein kinase UbiB (546 aa).

The 379-residue stretch at 124–502 folds into the Protein kinase domain; that stretch reads DFSVEPLASA…HVRQGQSRYL (379 aa). ATP-binding positions include 130–138 and Lys-153; that span reads LASASIAQV. Asp-288 (proton acceptor) is an active-site residue. The next 2 helical transmembrane spans lie at 501 to 521 and 522 to 542; these read YLFG…IHRP and EWGM…LIGW.

The protein belongs to the ABC1 family. UbiB subfamily.

The protein resides in the cell inner membrane. The protein operates within cofactor biosynthesis; ubiquinone biosynthesis [regulation]. Is probably a protein kinase regulator of UbiI activity which is involved in aerobic coenzyme Q (ubiquinone) biosynthesis. The chain is Probable protein kinase UbiB from Klebsiella pneumoniae (strain 342).